The sequence spans 563 residues: Arginine--tRNA ligase (563 aa).

A 'HIGH' region motif is present at residues 121–131 (PNIAKPFSIGH).

The protein belongs to the class-I aminoacyl-tRNA synthetase family. In terms of assembly, monomer.

Its subcellular location is the cytoplasm. The enzyme catalyses tRNA(Arg) + L-arginine + ATP = L-arginyl-tRNA(Arg) + AMP + diphosphate. The protein is Arginine--tRNA ligase of Streptococcus agalactiae serotype III (strain NEM316).